The following is a 360-amino-acid chain: MSIRSNFVRLLKKQVSIIKLQKKCSHSVAVIGAPFSKGQKRRGVEHGPAAIRSAGLIERLSNLGCNVCDFGDLHFSQVPNDELYNSIVKHPRTVGLACKVLAEEVSKAVGAGHTCVTLGGDHSLAFGSITGHAQQCPDLCVIWVDAHADINTPLTTPSGNLHGQPVSFLLRELQDKVPPIPGFSWAKPCLSKSDIVYIGLRDLDPAEQFILKNYDISYYSMRHIDCMGIKKVMEKTFDQLLGRRDRPIHLSFDIDAFDPALAPATGTPVIGGLTYREGVYITEEIHNTGMLSAVDLVEVNPVLAATSEEVKATANLAVDVIASCFGQTREGAHTRADTIIDVLPTPSTSYESDNEEQVRI.

4 residues coordinate Mn(2+): His-122, Asp-145, His-147, and Asp-149. Substrate contacts are provided by residues 147–151 (HADIN), 158–160 (SGN), and Asp-204. 2 residues coordinate Mn(2+): Asp-253 and Asp-255. Substrate-binding residues include Thr-267 and Glu-298.

Belongs to the arginase family. In terms of assembly, homotrimer. Requires Mn(2+) as cofactor. As to expression, expressed at differing tadpole stages in tail, intestine, hindlimb and trunk region. Most abundant in tadpole tail.

The enzyme catalyses L-arginine + H2O = urea + L-ornithine. It participates in nitrogen metabolism; urea cycle; L-ornithine and urea from L-arginine: step 1/1. Its function is as follows. As well as its role in the urea cycle, may be involved in tissue remodeling. This chain is Arginase, non-hepatic 1 (arg2-a), found in Xenopus laevis (African clawed frog).